Reading from the N-terminus, the 170-residue chain is RNA pyrophosphohydrolase (170 aa).

The 144-residue stretch at 6-149 (GFRPNVGIVI…KRDVYRRALK (144 aa)) folds into the Nudix hydrolase domain. A Nudix box motif is present at residues 38-59 (GGIDDGETPEQAMYRELYEEVG).

Belongs to the Nudix hydrolase family. RppH subfamily. A divalent metal cation serves as cofactor.

Accelerates the degradation of transcripts by removing pyrophosphate from the 5'-end of triphosphorylated RNA, leading to a more labile monophosphorylated state that can stimulate subsequent ribonuclease cleavage. In Aliivibrio salmonicida (strain LFI1238) (Vibrio salmonicida (strain LFI1238)), this protein is RNA pyrophosphohydrolase.